Consider the following 353-residue polypeptide: Photosystem II D2 protein (353 aa).

At threonine 2 the chain carries N-acetylthreonine. Threonine 2 carries the phosphothreonine modification. The helical transmembrane segment at cysteine 41 to threonine 61 threads the bilayer. Histidine 118 is a binding site for chlorophyll a. Residues glycine 125–proline 141 traverse the membrane as a helical segment. 2 residues coordinate pheophytin a: glutamine 130 and asparagine 143. The helical transmembrane segment at valine 153–serine 166 threads the bilayer. A chlorophyll a-binding site is contributed by histidine 198. A helical membrane pass occupies residues alanine 208–aspartate 228. Positions 215 and 262 each coordinate a plastoquinone. Histidine 215 contributes to the Fe cation binding site. Histidine 269 provides a ligand contact to Fe cation. The helical transmembrane segment at glycine 279–arginine 295 threads the bilayer.

Belongs to the reaction center PufL/M/PsbA/D family. PSII is composed of 1 copy each of membrane proteins PsbA, PsbB, PsbC, PsbD, PsbE, PsbF, PsbH, PsbI, PsbJ, PsbK, PsbL, PsbM, PsbT, PsbX, PsbY, PsbZ, Psb30/Ycf12, at least 3 peripheral proteins of the oxygen-evolving complex and a large number of cofactors. It forms dimeric complexes. The cofactor is The D1/D2 heterodimer binds P680, chlorophylls that are the primary electron donor of PSII, and subsequent electron acceptors. It shares a non-heme iron and each subunit binds pheophytin, quinone, additional chlorophylls, carotenoids and lipids. There is also a Cl(-1) ion associated with D1 and D2, which is required for oxygen evolution. The PSII complex binds additional chlorophylls, carotenoids and specific lipids..

The protein localises to the plastid. It localises to the chloroplast thylakoid membrane. It carries out the reaction 2 a plastoquinone + 4 hnu + 2 H2O = 2 a plastoquinol + O2. Functionally, photosystem II (PSII) is a light-driven water:plastoquinone oxidoreductase that uses light energy to abstract electrons from H(2)O, generating O(2) and a proton gradient subsequently used for ATP formation. It consists of a core antenna complex that captures photons, and an electron transfer chain that converts photonic excitation into a charge separation. The D1/D2 (PsbA/PsbD) reaction center heterodimer binds P680, the primary electron donor of PSII as well as several subsequent electron acceptors. D2 is needed for assembly of a stable PSII complex. The protein is Photosystem II D2 protein of Nuphar advena (Common spatterdock).